The primary structure comprises 316 residues: Apolipoprotein E (316 aa).

The N-terminal stretch at 1–18 is a signal peptide; that stretch reads MKVLWVALVITLLAGCQA. Repeat copies occupy residues 79–100, 101–122, 123–144, 145–166, 167–188, 189–210, 211–232, and 233–254. An 8 X 22 AA approximate tandem repeats region spans residues 79–254; that stretch reads VLMDETMKEV…HLEEMREQLE (176 aa). Met-142 carries the post-translational modification Methionine sulfoxide. The segment at 157 to 167 is LDL and other lipoprotein receptors binding; the sequence is HLRKLRKRLLR. Residue 161–164 coordinates heparin; it reads LRKR. Residues 209-289 are lipid-binding and lipoprotein association; it reads AATVGTLASQ…SWFEPLVEDM (81 aa). 228 to 235 serves as a coordination point for heparin; the sequence is HQKLRGRM. The tract at residues 265-316 is homooligomerization; it reads SQMRLQAEAFQARLKSWFEPLVEDMQRQWAGLVEKVQLAMATSPTSAPIENS. The specificity for association with VLDL stretch occupies residues 277–289; it reads RLKSWFEPLVEDM.

It belongs to the apolipoprotein A1/A4/E family. In terms of assembly, homotetramer. May interact with ABCA1; functionally associated with ABCA1 in the biogenesis of HDLs. May interact with APP/A4 amyloid-beta peptide; the interaction is extremely stable in vitro but its physiological significance is unclear. May interact with MAPT. May interact with MAP2. In the cerebrospinal fluid, interacts with secreted SORL1. Interacts with PMEL; this allows the loading of PMEL luminal fragment on ILVs to induce fibril nucleation. Post-translationally, APOE exists as multiple glycosylated and sialylated glycoforms within cells and in plasma. The extent of glycosylation and sialylation are tissue and context specific. Glycated in plasma VLDL. In terms of processing, phosphorylated by FAM20C in the extracellular medium.

It localises to the secreted. It is found in the extracellular space. The protein localises to the extracellular matrix. Its subcellular location is the extracellular vesicle. The protein resides in the endosome. It localises to the multivesicular body. Its function is as follows. APOE is an apolipoprotein, a protein associating with lipid particles, that mainly functions in lipoprotein-mediated lipid transport between organs via the plasma and interstitial fluids. APOE is a core component of plasma lipoproteins and is involved in their production, conversion and clearance. Apolipoproteins are amphipathic molecules that interact both with lipids of the lipoprotein particle core and the aqueous environment of the plasma. As such, APOE associates with chylomicrons, chylomicron remnants, very low density lipoproteins (VLDL) and intermediate density lipoproteins (IDL) but shows a preferential binding to high-density lipoproteins (HDL). It also binds a wide range of cellular receptors including the LDL receptor/LDLR and the very low-density lipoprotein receptor/VLDLR that mediate the cellular uptake of the APOE-containing lipoprotein particles. Finally, APOE also has a heparin-binding activity and binds heparan-sulfate proteoglycans on the surface of cells, a property that supports the capture and the receptor-mediated uptake of APOE-containing lipoproteins by cells. The sequence is that of Apolipoprotein E (APOE) from Orcinus orca (Killer whale).